Here is a 171-residue protein sequence, read N- to C-terminus: I (171 aa).

Disordered regions lie at residues 57-100 (IQYP…LFAQ) and 143-171 (PRTS…KRRA). Residues 151 to 162 (EFKRGGGRERLP) are compositionally biased toward basic and acidic residues.

It belongs to the Orthorubulavirus I protein family.

This is I from Mumps virus genotype N (strain L-Zagreb vaccine) (MuV).